The sequence spans 305 residues: Urease accessory protein UreD (305 aa).

Belongs to the UreD family. UreD, UreF and UreG form a complex that acts as a GTP-hydrolysis-dependent molecular chaperone, activating the urease apoprotein by helping to assemble the nickel containing metallocenter of UreC. The UreE protein probably delivers the nickel.

It is found in the cytoplasm. Its function is as follows. Required for maturation of urease via the functional incorporation of the urease nickel metallocenter. The chain is Urease accessory protein UreD from Delftia acidovorans (strain DSM 14801 / SPH-1).